The following is a 243-amino-acid chain: 2-C-methyl-D-erythritol 4-phosphate cytidylyltransferase (243 aa).

This sequence belongs to the IspD/TarI cytidylyltransferase family. IspD subfamily.

It catalyses the reaction 2-C-methyl-D-erythritol 4-phosphate + CTP + H(+) = 4-CDP-2-C-methyl-D-erythritol + diphosphate. The protein operates within isoprenoid biosynthesis; isopentenyl diphosphate biosynthesis via DXP pathway; isopentenyl diphosphate from 1-deoxy-D-xylulose 5-phosphate: step 2/6. Functionally, catalyzes the formation of 4-diphosphocytidyl-2-C-methyl-D-erythritol from CTP and 2-C-methyl-D-erythritol 4-phosphate (MEP). This Aeromonas hydrophila subsp. hydrophila (strain ATCC 7966 / DSM 30187 / BCRC 13018 / CCUG 14551 / JCM 1027 / KCTC 2358 / NCIMB 9240 / NCTC 8049) protein is 2-C-methyl-D-erythritol 4-phosphate cytidylyltransferase.